Consider the following 243-residue polypeptide: Small ribosomal subunit protein uS3 (243 aa).

The 69-residue stretch at M39–R107 folds into the KH type-2 domain. The segment at A214–A243 is disordered. Over residues S229 to A243 the composition is skewed to basic and acidic residues.

Belongs to the universal ribosomal protein uS3 family. As to quaternary structure, part of the 30S ribosomal subunit. Forms a tight complex with proteins S10 and S14.

Functionally, binds the lower part of the 30S subunit head. Binds mRNA in the 70S ribosome, positioning it for translation. The polypeptide is Small ribosomal subunit protein uS3 (Rhizobium leguminosarum bv. trifolii (strain WSM2304)).